The primary structure comprises 129 residues: Transcription antitermination protein NusB (129 aa).

The protein belongs to the NusB family.

Involved in transcription antitermination. Required for transcription of ribosomal RNA (rRNA) genes. Binds specifically to the boxA antiterminator sequence of the ribosomal RNA (rrn) operons. This Bacillus licheniformis (strain ATCC 14580 / DSM 13 / JCM 2505 / CCUG 7422 / NBRC 12200 / NCIMB 9375 / NCTC 10341 / NRRL NRS-1264 / Gibson 46) protein is Transcription antitermination protein NusB.